The primary structure comprises 504 residues: MPELATSGNAFDKRRFSRRGFLGAGIASGFALAACASKPTASGAAGMTAAIDAAEAARPHSGRTVTATLTPQPARIDLGGPIVSTLTYGNTIPGPLIRATVGDEIVVSVTNRLGDPTSVHWHGIALRNDMDGTEPATANIGPGGDFTYRFSVPDPGTYWAHPHVGLQGDHGLYLPVVVDDPTEPGHYDAEWIIILDDWTDGIGKSPQQLYGELTDPNKPTMQNTTGMPEGEGVDSNLLGGDGGDIAYPYYLINGRIPVAATSFKAKPGQRIRIRIINSAADTAFRIALAGHSMTVTHTDGYPVIPTEVDALLIGMAERYDVMVTAAGGVFPLVALAEGKNALARALLSTGAGSPPDPQFRPDELNWRVGTVEMFTAATTANLGRPEPTHDLPVTLGGTMAKYDWTINGEPYSTTNPLHVRLGQRPTLMFDNTTMMYHPIHLHGHTFQMIKADGSPGARKDTVIVLPKQKMRAVLVADNPGVWVMHCHNNYHQVAGMATRLDYIL.

The segment at residues 1 to 44 is a signal peptide (tat-type signal); that stretch reads MPELATSGNAFDKRRFSRRGFLGAGIASGFALAACASKPTASGA. Cu cation-binding residues include histidine 120, histidine 122, histidine 161, and histidine 163. Positions 190 to 349 constitute a Plastocyanin-like domain; it reads EWIIILDDWT…NALARALLST (160 aa). 7 residues coordinate Cu cation: histidine 437, histidine 440, histidine 442, histidine 485, cysteine 486, histidine 487, and histidine 491.

It belongs to the multicopper oxidase family. The cofactor is Cu cation. Predicted to be exported by the Tat system. The position of the signal peptide cleavage has not been experimentally proven.

It is found in the cell inner membrane. It localises to the periplasm. The enzyme catalyses 4 Fe(2+) + O2 + 4 H(+) = 4 Fe(3+) + 2 H2O. Functionally, required for copper resistance. In vitro, oxidizes organic substrates and Fe(2+). May act in vivo by oxidation of toxic periplasmic Cu(+). This is Multicopper oxidase MmcO from Mycobacterium tuberculosis (strain ATCC 25618 / H37Rv).